An 83-amino-acid polypeptide reads, in one-letter code: U5-theraphotoxin-Hs1a 4 (83 aa).

Positions 1–21 (MKTSMFLTLTGLVLLFVDCYA) are cleaved as a signal peptide. A propeptide spanning residues 22–49 (SESEEKEFPKELLSSIFAADSDFKVEER) is cleaved from the precursor. Cystine bridges form between Cys51–Cys63, Cys56–Cys68, and Cys62–Cys75.

It belongs to the neurotoxin 10 (Hwtx-1) family. 51 (Hntx-8) subfamily. Hntx-8 sub-subfamily. In terms of tissue distribution, expressed by the venom gland.

The protein resides in the secreted. In terms of biological role, agglutinates erythrocytes. The chain is U5-theraphotoxin-Hs1a 4 from Cyriopagopus schmidti (Chinese bird spider).